We begin with the raw amino-acid sequence, 500 residues long: NAD(P)H-quinone oxidoreductase chain 4, chloroplastic (500 aa).

The next 14 helical transmembrane spans lie at 4–24 (FPWL…IGFL), 37–57 (ICIC…HFQL), 87–107 (MGPV…AWPV), 113–130 (LFHF…GSFS), 134–154 (LLLF…LLSL), 167–187 (FILY…GMGL), 208–228 (ALEI…SPII), 242–262 (HYST…YGLV), 272–292 (AHSI…IYAA), 305–325 (IAYS…SITD), 330–350 (GSIL…FLAG), 386–406 (LALP…GIIT), 416–436 (ILIT…SLSM), and 462–482 (LFIL…PDFV).

It belongs to the complex I subunit 4 family.

The protein resides in the plastid. It is found in the chloroplast thylakoid membrane. The catalysed reaction is a plastoquinone + NADH + (n+1) H(+)(in) = a plastoquinol + NAD(+) + n H(+)(out). It carries out the reaction a plastoquinone + NADPH + (n+1) H(+)(in) = a plastoquinol + NADP(+) + n H(+)(out). The protein is NAD(P)H-quinone oxidoreductase chain 4, chloroplastic of Illicium oligandrum (Star anise).